The following is a 128-amino-acid chain: Ribonuclease P protein component (128 aa).

Belongs to the RnpA family. As to quaternary structure, consists of a catalytic RNA component (M1 or rnpB) and a protein subunit.

It carries out the reaction Endonucleolytic cleavage of RNA, removing 5'-extranucleotides from tRNA precursor.. RNaseP catalyzes the removal of the 5'-leader sequence from pre-tRNA to produce the mature 5'-terminus. It can also cleave other RNA substrates such as 4.5S RNA. The protein component plays an auxiliary but essential role in vivo by binding to the 5'-leader sequence and broadening the substrate specificity of the ribozyme. The protein is Ribonuclease P protein component of Prochlorococcus marinus (strain MIT 9312).